Here is a 327-residue protein sequence, read N- to C-terminus: Zinc transport protein ZntB (327 aa).

Over 1–273 (MDAIKGSELQ…ARRTYTMSLM (273 aa)) the chain is Cytoplasmic. Residues 274 to 294 (AMVFLPSTFLTGLFGVNLGGI) traverse the membrane as a helical segment. The Periplasmic portion of the chain corresponds to 295–300 (PGNSWH). A helical transmembrane segment spans residues 301 to 321 (LGFSLFCLMLVVVIGGVAWWL). Residues 322–327 (HRSKWL) lie on the Cytoplasmic side of the membrane.

It belongs to the CorA metal ion transporter (MIT) (TC 1.A.35) family.

It localises to the cell inner membrane. The enzyme catalyses Zn(2+)(out) + H(+)(out) = Zn(2+)(in) + H(+)(in). Functionally, zinc transporter. Acts as a Zn(2+):proton symporter, which likely mediates zinc ion uptake. The protein is Zinc transport protein ZntB of Klebsiella pneumoniae subsp. pneumoniae (strain ATCC 700721 / MGH 78578).